A 503-amino-acid polypeptide reads, in one-letter code: Probable cytosol aminopeptidase (503 aa).

Mn(2+) is bound by residues lysine 268 and aspartate 273. The active site involves lysine 280. Mn(2+) is bound by residues aspartate 291, aspartate 350, and glutamate 352. The active site involves arginine 354.

Belongs to the peptidase M17 family. Mn(2+) serves as cofactor.

The protein resides in the cytoplasm. The enzyme catalyses Release of an N-terminal amino acid, Xaa-|-Yaa-, in which Xaa is preferably Leu, but may be other amino acids including Pro although not Arg or Lys, and Yaa may be Pro. Amino acid amides and methyl esters are also readily hydrolyzed, but rates on arylamides are exceedingly low.. It catalyses the reaction Release of an N-terminal amino acid, preferentially leucine, but not glutamic or aspartic acids.. Functionally, presumably involved in the processing and regular turnover of intracellular proteins. Catalyzes the removal of unsubstituted N-terminal amino acids from various peptides. This is Probable cytosol aminopeptidase from Herminiimonas arsenicoxydans.